The primary structure comprises 251 residues: Probable aquaporin TIP4-1 (251 aa).

2 helical membrane passes run 26–46 and 57–77; these read LVLT…AGVP and ALAG…TAGF. The short motif at 85–87 is the NPA 1 element; that stretch reads NPA. The next 3 helical transmembrane spans lie at 104-124, 144-164, and 170-190; these read ALYV…LRYL, GLVM…ATIL, and VPGF…IAGG. The NPA 2 signature appears at 198–200; sequence NPA. The chain crosses the membrane as a helical span at residues 219 to 239; the sequence is WLGPLIGGPLAGLVYESLFLV.

Belongs to the MIP/aquaporin (TC 1.A.8) family. TIP (TC 1.A.8.10) subfamily. As to expression, expressed in roots, leaves and anthers.

Its subcellular location is the vacuole membrane. Functionally, aquaporins facilitate the transport of water and small neutral solutes across cell membranes. May be involved in transport from the vacuolar compartment to the cytoplasm. In Oryza sativa subsp. japonica (Rice), this protein is Probable aquaporin TIP4-1 (TIP4-1).